Reading from the N-terminus, the 443-residue chain is Serine/threonine-protein phosphatase 2A 55 kDa regulatory subunit B beta isoform (443 aa).

4 WD repeats span residues 22-61, 87-128, 171-209, and 220-260; these read TEADIISAVEFNHTGELLATGDKGGRVVIFQREQESKNQV, EIEE…KRPE, AHTYHINSISVNSDYETYMSADDLRINLWNFEITNQSFN, and ELTE…CVTG. The residue at position 275 (Ser-275) is a Phosphoserine. WD repeat units lie at residues 279 to 317, 334 to 375, and 410 to 442; these read KLSSSISDVKFSQQWEDIMTRDYLTVKVWDLNMENRPIE, ENDC…DVTL, and DFSKKILHTAWHPSENIIAVAATNNLYIFQDKV. At Thr-298 the chain carries Phosphothreonine.

It belongs to the phosphatase 2A regulatory subunit B family. In terms of assembly, PP2A consists of a common heterodimeric core enzyme, composed of a 36 kDa catalytic subunit (subunit C) and a 65 kDa constant regulatory subunit (PR65 or subunit A), that associates with a variety of regulatory subunits. Proteins that associate with the core dimer include three families of regulatory subunits B (the R2/B/PR55/B55, R3/B''/PR72/PR130/PR59 and R5/B'/B56 families), the 48 kDa variable regulatory subunit, viral proteins, and cell signaling molecules. Interacts with TOMM22. Interacts with IER5 (via N- and C-terminal regions). Brain.

Its subcellular location is the cytoplasm. It is found in the cytoskeleton. The protein localises to the membrane. Its function is as follows. The B regulatory subunit might modulate substrate selectivity and catalytic activity, and might also direct the localization of the catalytic enzyme to a particular subcellular compartment. In Sus scrofa (Pig), this protein is Serine/threonine-protein phosphatase 2A 55 kDa regulatory subunit B beta isoform (PPP2R2B).